The sequence spans 739 residues: MSSENKEQHNLSPRDLPEEAYGFPPELPLGAQRGSSTDLRQFEPSDRRRAFRRIHMELHEKPDTNIRQLVMRKLQKSCQCNATKIRNRIFDFFPVLRWLPKYDLKKNILGDMMSGLIVGILLVPQSIAYSLLAGQEPIYGLYTSFFASIIYFLFGTSRHISVGIFGILCLMIGEVVDRELHKACPDIDTTSSSIAMFSNGCVVVNHTLDGLCDKSCYAIKIGSTVTFMAGVYQVAMGFFQVGFVSVYLSDALLSGFVTGASFTILTSQAKYLLGLSLPRSNGVGSVITTWIHIFRNIHKTNICDLITSLLCLLVLVPTKELNEYFKSKLPAPIPTELIVVVAATLASHFGKLNENYNSSIAGQIPTGFMPPQAPDWSLIPNVAVDAIAISIIGFAITVSLSEMFAKKHGYTVKANQEMYAIGFCNIIPSFFHCITTSAALAKTLVKESTGCQTQLSAIVTSLVLLLVLLLIAPLFYSLQKCVLGVITIVNLRGALLKFRDLPKMWRLSRMDTVIWFVTMLSSALLSTEIGLLVGVCFSMFCVILRTQMPKISLLGLEEESEIFESISTYKNLRSKSGIKVFRFIAPLYYINKECFKSALYKKTLNPVLVKAAWKKAAKRKLKEETVTFHGDPDEVSMQLSHDPLELHTVVIDCSAIQFLDTAGIHTLKEVRRDYEAIGIQVLLAQCNPSVRDSLAKGEYCKKEEENLLFYSLSEAVAFAEESQKEKGVCVVNGLSLSGD.

The interval 1–44 (MSSENKEQHNLSPRDLPEEAYGFPPELPLGAQRGSSTDLRQFEP) is disordered. Serine 12 is modified (phosphoserine). 2 helical membrane passes run 112 to 132 (MMSG…YSLL) and 137 to 157 (PIYG…FGTS). Asparagine 205 carries an N-linked (GlcNAc...) asparagine glycan. Transmembrane regions (helical) follow at residues 227–247 (FMAG…VSVY) and 255–275 (GFVT…LLGL). The N-linked (GlcNAc...) asparagine glycan is linked to asparagine 357. A run of 4 helical transmembrane segments spans residues 378-398 (LIPN…AITV), 420-440 (AIGF…SAAL), 455-475 (LSAI…APLF), and 524-544 (LLST…CVIL). The STAS domain maps to 568 to 719 (TYKNLRSKSG…YSLSEAVAFA (152 aa)).

The protein belongs to the SLC26A/SulP transporter (TC 2.A.53) family. Post-translationally, N-glycosylated. In terms of tissue distribution, cartilage and intestine. Expressed in the kidney (at protein level).

Its subcellular location is the cell membrane. The protein localises to the apical cell membrane. It catalyses the reaction oxalate(in) + sulfate(out) = oxalate(out) + sulfate(in). The catalysed reaction is sulfate(out) + 2 chloride(in) = sulfate(in) + 2 chloride(out). It carries out the reaction oxalate(out) + 2 chloride(in) = oxalate(in) + 2 chloride(out). The enzyme catalyses bromide(in) + chloride(out) = bromide(out) + chloride(in). It catalyses the reaction nitrate(in) + chloride(out) = nitrate(out) + chloride(in). The catalysed reaction is iodide(in) + chloride(out) = iodide(out) + chloride(in). Its function is as follows. Sulfate transporter which mediates sulfate uptake into chondrocytes in order to maintain adequate sulfation of proteoglycans which is needed for cartilage development. Mediates electroneutral anion exchange of sulfate ions for oxalate ions, sulfate and oxalate ions for chloride and/or hydroxyl ions and chloride ions for bromide, iodide and nitrate ions. The coupling of sulfate transport to both hydroxyl and chloride ions likely serves to ensure transport at both acidic pH when most sulfate uptake is mediated by sulfate-hydroxide exchange and alkaline pH when most sulfate uptake is mediated by sulfate-chloride exchange. Essential for chondrocyte proliferation, differentiation and cell size expansion. The chain is Sulfate transporter (Slc26a2) from Rattus norvegicus (Rat).